Consider the following 398-residue polypeptide: 4-hydroxy-3-methylbut-2-en-1-yl diphosphate synthase (ferredoxin) (398 aa).

4 residues coordinate [4Fe-4S] cluster: Cys306, Cys309, Cys340, and Glu347.

This sequence belongs to the IspG family. [4Fe-4S] cluster is required as a cofactor.

The enzyme catalyses (2E)-4-hydroxy-3-methylbut-2-enyl diphosphate + 2 oxidized [2Fe-2S]-[ferredoxin] + H2O = 2-C-methyl-D-erythritol 2,4-cyclic diphosphate + 2 reduced [2Fe-2S]-[ferredoxin] + H(+). The protein operates within isoprenoid biosynthesis; isopentenyl diphosphate biosynthesis via DXP pathway; isopentenyl diphosphate from 1-deoxy-D-xylulose 5-phosphate: step 5/6. Its function is as follows. Converts 2C-methyl-D-erythritol 2,4-cyclodiphosphate (ME-2,4cPP) into 1-hydroxy-2-methyl-2-(E)-butenyl 4-diphosphate. This chain is 4-hydroxy-3-methylbut-2-en-1-yl diphosphate synthase (ferredoxin), found in Synechococcus sp. (strain CC9311).